A 375-amino-acid chain; its full sequence is tRNA-specific 2-thiouridylase MnmA (375 aa).

ATP contacts are provided by residues 16–23 and Met42; that span reads GMSGGVDS. The interval 102–104 is interaction with target base in tRNA; sequence NPD. Cys107 functions as the Nucleophile in the catalytic mechanism. A disulfide bond links Cys107 and Cys203. Gly131 is a binding site for ATP. The interval 153 to 155 is interaction with tRNA; sequence KDQ. The active-site Cysteine persulfide intermediate is Cys203. Positions 315–316 are interaction with tRNA; that stretch reads RY.

This sequence belongs to the MnmA/TRMU family.

The protein localises to the cytoplasm. It catalyses the reaction S-sulfanyl-L-cysteinyl-[protein] + uridine(34) in tRNA + AH2 + ATP = 2-thiouridine(34) in tRNA + L-cysteinyl-[protein] + A + AMP + diphosphate + H(+). Functionally, catalyzes the 2-thiolation of uridine at the wobble position (U34) of tRNA, leading to the formation of s(2)U34. The sequence is that of tRNA-specific 2-thiouridylase MnmA from Pseudomonas aeruginosa (strain LESB58).